A 251-amino-acid chain; its full sequence is RING-H2 finger protein ATL10 (251 aa).

A helical transmembrane segment spans residues 59-79 (MMLLSILICGIICCLGLHYII). The segment at 135–177 (CVICLSDFVSGEQLRLLPKCNHGFHVRCIDKWLQQHLTCPKCR) adopts an RING-type; atypical zinc-finger fold.

This sequence belongs to the RING-type zinc finger family. ATL subfamily.

It is found in the membrane. The catalysed reaction is S-ubiquitinyl-[E2 ubiquitin-conjugating enzyme]-L-cysteine + [acceptor protein]-L-lysine = [E2 ubiquitin-conjugating enzyme]-L-cysteine + N(6)-ubiquitinyl-[acceptor protein]-L-lysine.. It participates in protein modification; protein ubiquitination. This chain is RING-H2 finger protein ATL10 (ATL10), found in Arabidopsis thaliana (Mouse-ear cress).